Reading from the N-terminus, the 651-residue chain is Acetyl-coenzyme A synthetase (651 aa).

CoA-binding positions include 190–193 (RRGK) and threonine 311. ATP-binding positions include 387-389 (GEP), 411-416 (DTWWQT), aspartate 508, and arginine 523. Serine 531 is a CoA binding site. Residue arginine 534 participates in ATP binding. 3 residues coordinate Mg(2+): valine 545, histidine 547, and valine 550. Lysine 617 carries the N6-acetyllysine modification.

It belongs to the ATP-dependent AMP-binding enzyme family. It depends on Mg(2+) as a cofactor. Acetylated. Deacetylation by the SIR2-homolog deacetylase activates the enzyme.

It catalyses the reaction acetate + ATP + CoA = acetyl-CoA + AMP + diphosphate. Its function is as follows. Catalyzes the conversion of acetate into acetyl-CoA (AcCoA), an essential intermediate at the junction of anabolic and catabolic pathways. AcsA undergoes a two-step reaction. In the first half reaction, AcsA combines acetate with ATP to form acetyl-adenylate (AcAMP) intermediate. In the second half reaction, it can then transfer the acetyl group from AcAMP to the sulfhydryl group of CoA, forming the product AcCoA. M.tuberculosis may use AcsA for both acetate and propionate assimilation. The protein is Acetyl-coenzyme A synthetase of Mycobacterium tuberculosis (strain CDC 1551 / Oshkosh).